A 353-amino-acid chain; its full sequence is Probable dual-specificity RNA methyltransferase RlmN (353 aa).

Glu90 acts as the Proton acceptor in catalysis. In terms of domain architecture, Radical SAM core spans 96-326 (YKHGNSICIS…VTTRREMGSD (231 aa)). Residues Cys103 and Cys331 are joined by a disulfide bond. Positions 110, 114, and 117 each coordinate [4Fe-4S] cluster. Residues 157–158 (GE), Ser189, 212–214 (SLH), and Asn288 each bind S-adenosyl-L-methionine. Residue Cys331 is the S-methylcysteine intermediate of the active site.

The protein belongs to the radical SAM superfamily. RlmN family. It depends on [4Fe-4S] cluster as a cofactor.

It is found in the cytoplasm. It carries out the reaction adenosine(2503) in 23S rRNA + 2 reduced [2Fe-2S]-[ferredoxin] + 2 S-adenosyl-L-methionine = 2-methyladenosine(2503) in 23S rRNA + 5'-deoxyadenosine + L-methionine + 2 oxidized [2Fe-2S]-[ferredoxin] + S-adenosyl-L-homocysteine. It catalyses the reaction adenosine(37) in tRNA + 2 reduced [2Fe-2S]-[ferredoxin] + 2 S-adenosyl-L-methionine = 2-methyladenosine(37) in tRNA + 5'-deoxyadenosine + L-methionine + 2 oxidized [2Fe-2S]-[ferredoxin] + S-adenosyl-L-homocysteine. In terms of biological role, specifically methylates position 2 of adenine 2503 in 23S rRNA and position 2 of adenine 37 in tRNAs. The polypeptide is Probable dual-specificity RNA methyltransferase RlmN (Clostridium beijerinckii (strain ATCC 51743 / NCIMB 8052) (Clostridium acetobutylicum)).